The sequence spans 619 residues: ATP-dependent zinc metalloprotease FtsH (619 aa).

Residues 1–11 (MDKQSKFRIKT) are Cytoplasmic-facing. The helical transmembrane segment at 12 to 32 (FFKKIIFFLIIFCFFYFFNFI) threads the bilayer. Residues 33–131 (KKTKKITHTT…FKNYKIYTVL (99 aa)) lie on the Periplasmic side of the membrane. The chain crosses the membrane as a helical span at residues 132-152 (NFFYDYGFFLMIIIICWIFIF). The Cytoplasmic portion of the chain corresponds to 153–619 (RKIASRSSES…FKEDFASILD (467 aa)). Position 224 to 231 (224 to 231 (GPPGTGKT)) interacts with ATP. Residue H447 participates in Zn(2+) binding. Residue E448 is part of the active site. Residues H451 and D522 each coordinate Zn(2+).

This sequence in the central section; belongs to the AAA ATPase family. In the C-terminal section; belongs to the peptidase M41 family. As to quaternary structure, homohexamer. It depends on Zn(2+) as a cofactor.

It localises to the cell inner membrane. Acts as a processive, ATP-dependent zinc metallopeptidase for both cytoplasmic and membrane proteins. Plays a role in the quality control of integral membrane proteins. The protein is ATP-dependent zinc metalloprotease FtsH of Karelsulcia muelleri (strain DMIN) (Sulcia muelleri).